Here is a 250-residue protein sequence, read N- to C-terminus: MSSSALKKWEIVIRFASSIPDLSLEISDAQTTTIHSLFKIVRNRIPECRDKQLKMVFQGRLLSPGFTVERAVRGNWQRDENDDPNIVQKAFIHCIVGPTLTEEELASQDQAQSGLNSNSESPDDLQNAQTGETLRGFDRLREAGFTETEVNNLRSQFHRLRGTNLDSLTEDAIREAEDDWIDNGGQNSSADELDMSYETLLAGVLIGFFGGAIACYFLWERTMFSLRMQLSILVGIICNFAYGLLHSYRW.

Positions 105-130 are disordered; that stretch reads LASQDQAQSGLNSNSESPDDLQNAQT. Polar residues predominate over residues 107–130; the sequence is SQDQAQSGLNSNSESPDDLQNAQT. Asn-187 is a glycosylation site (N-linked (GlcNAc...) asparagine). The next 2 membrane-spanning stretches (helical) occupy residues 199–219 and 228–248; these read TLLA…YFLW and MQLS…LHSY.

The protein belongs to the dsc3 family. Component of the DSC E3 ubiquitin ligase complex composed of dsc1, dsc2, dsc3 and dsc4.

The protein localises to the endoplasmic reticulum membrane. The protein resides in the golgi apparatus membrane. It participates in protein modification; protein ubiquitination. Its function is as follows. Component of the DSC E3 ubiquitin ligase complex which is required for the sre1 transcriptional activator proteolytic cleavage to release the soluble transcription factor from the membrane in low oxygen or sterol conditions. The complex also plays an important role in the multivesicular body (MVB) pathway and functions in a post-endoplasmic reticulum pathway for protein degradation. This Schizosaccharomyces pombe (strain 972 / ATCC 24843) (Fission yeast) protein is DSC E3 ubiquitin ligase complex subunit 3 (dsc3).